We begin with the raw amino-acid sequence, 167 residues long: Ribosome maturation factor RimM (167 aa).

One can recognise a PRC barrel domain in the interval Glu-94–Leu-165.

The protein belongs to the RimM family. In terms of assembly, binds ribosomal protein uS19.

The protein localises to the cytoplasm. Its function is as follows. An accessory protein needed during the final step in the assembly of 30S ribosomal subunit, possibly for assembly of the head region. Essential for efficient processing of 16S rRNA. May be needed both before and after RbfA during the maturation of 16S rRNA. It has affinity for free ribosomal 30S subunits but not for 70S ribosomes. The polypeptide is Ribosome maturation factor RimM (Staphylococcus aureus (strain NCTC 8325 / PS 47)).